Here is a 161-residue protein sequence, read N- to C-terminus: Regulator of ribonuclease activity A (161 aa).

Belongs to the RraA family. In terms of assembly, homotrimer. Binds to both RNA-binding sites in the C-terminal region of Rne and to RhlB.

The protein resides in the cytoplasm. In terms of biological role, globally modulates RNA abundance by binding to RNase E (Rne) and regulating its endonucleolytic activity. Can modulate Rne action in a substrate-dependent manner by altering the composition of the degradosome. Modulates RNA-binding and helicase activities of the degradosome. This Edwardsiella ictaluri (strain 93-146) protein is Regulator of ribonuclease activity A.